The chain runs to 314 residues: Acetaldehyde dehydrogenase 4 (314 aa).

NAD(+) is bound at residue 15–18 (SGNI). Catalysis depends on Cys133, which acts as the Acyl-thioester intermediate. Residues 164-172 (SAGPGTRAN) and Asn292 contribute to the NAD(+) site.

Belongs to the acetaldehyde dehydrogenase family.

It carries out the reaction acetaldehyde + NAD(+) + CoA = acetyl-CoA + NADH + H(+). This Burkholderia lata (strain ATCC 17760 / DSM 23089 / LMG 22485 / NCIMB 9086 / R18194 / 383) protein is Acetaldehyde dehydrogenase 4.